The chain runs to 199 residues: Thymidine kinase (199 aa).

ATP-binding positions include 15 to 22 and 88 to 91; these read GSMFSGKS and DEIQ. The active-site Proton acceptor is E89. Zn(2+) contacts are provided by C145, C148, C183, and H186.

Belongs to the thymidine kinase family. As to quaternary structure, homotetramer.

The protein localises to the cytoplasm. The catalysed reaction is thymidine + ATP = dTMP + ADP + H(+). The protein is Thymidine kinase of Staphylococcus haemolyticus (strain JCSC1435).